Here is a 463-residue protein sequence, read N- to C-terminus: Kynurenine 3-monooxygenase (463 aa).

The protein belongs to the aromatic-ring hydroxylase family. KMO subfamily. FAD is required as a cofactor.

Its subcellular location is the mitochondrion outer membrane. It catalyses the reaction L-kynurenine + NADPH + O2 + H(+) = 3-hydroxy-L-kynurenine + NADP(+) + H2O. Its pathway is cofactor biosynthesis; NAD(+) biosynthesis; quinolinate from L-kynurenine: step 1/3. In terms of biological role, catalyzes the hydroxylation of L-kynurenine (L-Kyn) to form 3-hydroxy-L-kynurenine (L-3OHKyn). Required for synthesis of quinolinic acid. In Yarrowia lipolytica (strain CLIB 122 / E 150) (Yeast), this protein is Kynurenine 3-monooxygenase.